Here is a 387-residue protein sequence, read N- to C-terminus: TSC22 domain family protein 4 (387 aa).

Disordered stretches follow at residues 1–85 (MSGG…GEPY) and 135–232 (ISTP…RRDG). Residues 31–51 (PVPPALAGPPPRLPNGDPNPD) show a composition bias toward pro residues. T57 is subject to Phosphothreonine. Phosphoserine is present on residues S62 and S165. T183 carries the post-translational modification Phosphothreonine. A phosphoserine mark is found at S187, S189, and S219. T223 bears the Phosphothreonine mark. 3 positions are modified to phosphoserine: S254, S258, and S271. The interval 336–357 (LKEQIRDLAERNAALEQENGLL) is leucine-zipper. S362 is modified (phosphoserine). Residues 368-387 (QLPSSGLPRLGPSAPNGPSI) are disordered.

Belongs to the TSC-22/Dip/Bun family. As to quaternary structure, forms a homodimer or heterodimer. Forms a heterodimer with TSC22D1 isoforms 1 and 2. Interacts with NRBP1. In terms of tissue distribution, expressed in the liver (at protein level). Expressed in Purkinje cells and proliferating cerebellar granular neurons (at protein level). Expressed in the cortex, medulla and papilla of the kidney.

The protein localises to the nucleus. Its subcellular location is the cytoplasm. It localises to the cell projection. It is found in the dendrite. The protein resides in the synapse. Binds DNA and acts as a transcriptional repressor. Involved in the regulation of systematic glucose homeostasis and insulin sensitivity, via transcriptional repression of downstream insulin signaling targets such as OBP2A/LCN13. Acts as a negative regulator of lipogenic gene expression in hepatocytes and thereby mediates the control of very low-density lipoprotein release. May play a role in neurite elongation and survival. This is TSC22 domain family protein 4 from Mus musculus (Mouse).